A 1113-amino-acid polypeptide reads, in one-letter code: Protein MGA2 (1113 aa).

Residues 91-114 (TPLEEEMESNRALKEEEEDEHENK) are disordered. Residue Ser-255 is modified to Phosphoserine. Composition is skewed to polar residues over residues 344–357 (DTTK…SSRR) and 437–452 (HIPS…SESF). Disordered stretches follow at residues 344 to 376 (DTTK…NNQL) and 437 to 462 (HIPS…NDNP). Position 467 is a phosphoserine (Ser-467). Residues 530 to 610 (PSINRVIPSQ…NENNNDDLPQ (81 aa)) enclose the IPT/TIG domain. Residues 658-687 (IVGNDSPDSGTNGNSCSKSTGPSPNQHSMN) form a disordered region. Residues 663-687 (SPDSGTNGNSCSKSTGPSPNQHSMN) are compositionally biased toward polar residues. ANK repeat units follow at residues 719–748 (LGRT…RVND) and 752–781 (FGLT…NYSL). A helical transmembrane segment spans residues 1037–1054 (MLIFFWIPLTLLLLTWFI).

It localises to the membrane. This is Protein MGA2 (MGA2) from Saccharomyces cerevisiae (strain ATCC 204508 / S288c) (Baker's yeast).